Reading from the N-terminus, the 362-residue chain is MAHRRIILLLAAAAVAATSAVAAASSGFDDSNPIRSVTDHAASALESTVIAALGRTRDALRFARFAVRHGKRYGDAAEVQRRFRIFSESLELVRSTNRRGLPYRLGINRFADMSWEEFQASRLGAAQNCSATLAGNHRMRDAAALPETKDWREDGIVSPVKDQGHCGSCWTFSTTGSLEAAYTQATGKPVSLSEQQLVDCATAYNNFGCSGGLPSQAFEYIKYNGGLDTEEAYPYTGVNGICHYKPENVGVKVLDSVNITLGAEDELKNAVGLVRPVSVAFQVINGFRMYKSGVYTSDHCGTSPMDVNHAVLAVGYGVENGVPYWLIKNSWGADWGDNGYFKMEMGKNMCGIATCASYPIVA.

The N-terminal stretch at 1-24 is a signal peptide; the sequence is MAHRRIILLLAAAAVAATSAVAAA. A propeptide spans 25 to 144 (activation peptide); that stretch reads SSGFDDSNPI…GNHRMRDAAA (120 aa). N-linked (GlcNAc...) asparagine glycosylation is present at Asn-128. Disulfide bonds link Cys-166-Cys-209 and Cys-200-Cys-242. Residue Cys-169 is part of the active site. Residue Asn-258 is glycosylated (N-linked (GlcNAc...) asparagine). The cysteines at positions 300 and 350 are disulfide-linked. Catalysis depends on residues His-309 and Asn-329.

It belongs to the peptidase C1 family. In terms of tissue distribution, expressed only in seeds.

This chain is Oryzain gamma chain, found in Oryza sativa subsp. japonica (Rice).